A 155-amino-acid chain; its full sequence is 6,7-dimethyl-8-ribityllumazine synthase (155 aa).

5-amino-6-(D-ribitylamino)uracil contacts are provided by residues W23, A57 to E59, and C81 to I83. (2S)-2-hydroxy-3-oxobutyl phosphate is bound at residue D86–T87. H89 acts as the Proton donor in catalysis. N114 lines the 5-amino-6-(D-ribitylamino)uracil pocket. R128 is a binding site for (2S)-2-hydroxy-3-oxobutyl phosphate.

It belongs to the DMRL synthase family. Forms an icosahedral capsid composed of 60 subunits, arranged as a dodecamer of pentamers.

It carries out the reaction (2S)-2-hydroxy-3-oxobutyl phosphate + 5-amino-6-(D-ribitylamino)uracil = 6,7-dimethyl-8-(1-D-ribityl)lumazine + phosphate + 2 H2O + H(+). It functions in the pathway cofactor biosynthesis; riboflavin biosynthesis; riboflavin from 2-hydroxy-3-oxobutyl phosphate and 5-amino-6-(D-ribitylamino)uracil: step 1/2. Its function is as follows. Catalyzes the formation of 6,7-dimethyl-8-ribityllumazine by condensation of 5-amino-6-(D-ribitylamino)uracil with 3,4-dihydroxy-2-butanone 4-phosphate. This is the penultimate step in the biosynthesis of riboflavin. This chain is 6,7-dimethyl-8-ribityllumazine synthase, found in Stenotrophomonas maltophilia (strain K279a).